The sequence spans 950 residues: Leucine--tRNA ligase (950 aa).

The short motif at 66-77 is the 'HIGH' region element; it reads PYPSGAGLHVGH. The 'KMSKS' region motif lies at 721–725; sequence KIGKS. ATP is bound at residue Lys-724.

The protein belongs to the class-I aminoacyl-tRNA synthetase family.

Its subcellular location is the cytoplasm. It catalyses the reaction tRNA(Leu) + L-leucine + ATP = L-leucyl-tRNA(Leu) + AMP + diphosphate. This Nocardia farcinica (strain IFM 10152) protein is Leucine--tRNA ligase.